A 407-amino-acid chain; its full sequence is Elongation factor Tu (407 aa).

A tr-type G domain is found at K10–E217. Residues G19–T26 form a G1 region. A GTP-binding site is contributed by G19–T26. T26 contributes to the Mg(2+) binding site. A G2 region spans residues G60–S64. Positions D81 to G84 are G3. GTP contacts are provided by residues D81–H85 and N136–D139. A G4 region spans residues N136–D139. The tract at residues S184–L186 is G5.

This sequence belongs to the TRAFAC class translation factor GTPase superfamily. Classic translation factor GTPase family. EF-Tu/EF-1A subfamily. Monomer.

It is found in the cytoplasm. It carries out the reaction GTP + H2O = GDP + phosphate + H(+). Its function is as follows. GTP hydrolase that promotes the GTP-dependent binding of aminoacyl-tRNA to the A-site of ribosomes during protein biosynthesis. This chain is Elongation factor Tu, found in Marinomonas sp. (strain MWYL1).